We begin with the raw amino-acid sequence, 193 residues long: Mediator of RNA polymerase II transcription subunit 11 (193 aa).

A coiled-coil region spans residues 31-68 (AREIMQDLGKEKQISKNKMDDNANSFKKLITQVENELS). The disordered stretch occupies residues 115-193 (IEPPTQEVDE…EEEEGEQMEN (79 aa)). A compositionally biased stretch (acidic residues) spans 121–143 (EVDEDNEDEEDSGDADMLEETPE). Residues 150–175 (TTSSSATTSDGGSGGADDAASSSAPR) are compositionally biased toward low complexity. Acidic residues predominate over residues 184 to 193 (EEEEGEQMEN).

It belongs to the Mediator complex subunit 11 family. In terms of assembly, component of the Mediator complex.

The protein resides in the nucleus. Functionally, component of the Mediator complex, a coactivator involved in the regulated transcription of nearly all RNA polymerase II-dependent genes. Mediator functions as a bridge to convey information from gene-specific regulatory proteins to the basal RNA polymerase II transcription machinery. Mediator is recruited to promoters by direct interactions with regulatory proteins and serves as a scaffold for the assembly of a functional pre-initiation complex with RNA polymerase II and the general transcription factors. The sequence is that of Mediator of RNA polymerase II transcription subunit 11 (mdt-11) from Caenorhabditis briggsae.